Consider the following 62-residue polypeptide: Zinc metalloproteinase-disintegrin-like BaG (62 aa).

The Peptidase M12B domain occupies 24–54 (KTDLLNRSHDNAQLSPINLVVAVIMAHEMGH). An N-linked (GlcNAc...) asparagine glycan is attached at Asn29. His50 serves as a coordination point for Zn(2+). The active site involves Glu51. His54 serves as a coordination point for Zn(2+).

Belongs to the venom metalloproteinase (M12B) family. P-III subfamily. P-IIIc sub-subfamily. As to quaternary structure, dimer. Zn(2+) is required as a cofactor. The N-terminus is blocked. In terms of tissue distribution, expressed by the venom gland.

The protein localises to the secreted. Inhibited by EDTA, and 1,10-phenanthroline. In terms of biological role, snake venom Zinc metalloproteinase that inhibits ADP-induced platelet aggregation and inhibits the alpha-5/beta-1 (ITGA5/ITGB1) integrin, a fibronectin receptor. Has caseinolytic activity. Induces the detachment of cells that are bound to fibronectin. The protein is Zinc metalloproteinase-disintegrin-like BaG of Bothrops alternatus (Urutu).